The following is a 236-amino-acid chain: uncharacterized protein (236 aa).

Positions 1 to 12 are enriched in basic residues; the sequence is MKLLGHRKSHGH. A disordered region spans residues 1–108; it reads MKLLGHRKSH…KAANRARMTE (108 aa). Basic and acidic residues predominate over residues 13-31; sequence QRADASPDAGSKDGCRPDS. The segment covering 32-47 has biased composition (low complexity); the sequence is GRTSGSDTSRGSQTTG. Positions 52-65 are enriched in basic residues; sequence PTPKRNQSRRHTKK. The segment covering 67 to 78 has biased composition (low complexity); the sequence is PVAPAPMTAAQA. The span at 90–108 shows a compositional bias: basic and acidic residues; sequence LSREERRAEKAANRARMTE. 2 consecutive transmembrane segments (helical) span residues 142-162 and 166-186; these read NLLG…FAVP and FYLS…AIIL.

It is found in the cell membrane. This is an uncharacterized protein from Mycobacterium tuberculosis (strain CDC 1551 / Oshkosh).